The following is a 38-amino-acid chain: Potassium channel toxin alpha-KTx 3.3 (38 aa).

Disulfide bonds link C8–C28, C14–C33, and C18–C35. The segment at 26–33 (GKCMNRKC) is interaction with Ca(2+)-activated K(+) channels.

This sequence belongs to the short scorpion toxin superfamily. Potassium channel inhibitor family. Alpha-KTx 03 subfamily. As to expression, expressed by the venom gland.

Its subcellular location is the secreted. Potent inhibitor of shaker potassium channels as well as the mammalian homologs of shaker. This chain is Potassium channel toxin alpha-KTx 3.3, found in Leiurus hebraeus (Hebrew deathstalker scorpion).